Consider the following 95-residue polypeptide: Acylphosphatase (95 aa).

In terms of domain architecture, Acylphosphatase-like spans 7-95 (CTMAWVYGSV…RSWDKFAILY (89 aa)). Catalysis depends on residues arginine 22 and asparagine 40.

Belongs to the acylphosphatase family.

It catalyses the reaction an acyl phosphate + H2O = a carboxylate + phosphate + H(+). This chain is Acylphosphatase (acyP), found in Klebsiella pneumoniae subsp. pneumoniae (strain ATCC 700721 / MGH 78578).